The sequence spans 319 residues: ATP-dependent 6-phosphofructokinase (319 aa).

Residue Gly-11 participates in ATP binding. 21-25 (RAVVR) is a binding site for ADP. Residues 72 to 73 (RC) and 102 to 105 (GDGS) each bind ATP. Mg(2+) is bound at residue Asp-103. Substrate is bound at residue 125-127 (TID). Asp-127 (proton acceptor) is an active-site residue. Arg-154 lines the ADP pocket. Substrate-binding positions include Arg-162 and 169–171 (MGR). ADP is bound by residues 185 to 187 (GAE), Arg-211, and 213 to 215 (KKH). Substrate contacts are provided by residues Glu-222, Arg-243, and 249-252 (HVQR).

Belongs to the phosphofructokinase type A (PFKA) family. ATP-dependent PFK group I subfamily. Prokaryotic clade 'B1' sub-subfamily. In terms of assembly, homotetramer. Mg(2+) serves as cofactor.

The protein localises to the cytoplasm. The catalysed reaction is beta-D-fructose 6-phosphate + ATP = beta-D-fructose 1,6-bisphosphate + ADP + H(+). Its pathway is carbohydrate degradation; glycolysis; D-glyceraldehyde 3-phosphate and glycerone phosphate from D-glucose: step 3/4. Allosterically activated by ADP and other diphosphonucleosides, and allosterically inhibited by phosphoenolpyruvate. Catalyzes the phosphorylation of D-fructose 6-phosphate to fructose 1,6-bisphosphate by ATP, the first committing step of glycolysis. The protein is ATP-dependent 6-phosphofructokinase of Bacillus anthracis (strain A0248).